The primary structure comprises 465 residues: Methylenetetrahydrofolate--tRNA-(uracil-5-)-methyltransferase TrmFO (465 aa).

Residue 11–16 participates in FAD binding; it reads GGGLAG.

This sequence belongs to the MnmG family. TrmFO subfamily. FAD serves as cofactor.

It is found in the cytoplasm. It carries out the reaction uridine(54) in tRNA + (6R)-5,10-methylene-5,6,7,8-tetrahydrofolate + NADH + H(+) = 5-methyluridine(54) in tRNA + (6S)-5,6,7,8-tetrahydrofolate + NAD(+). The enzyme catalyses uridine(54) in tRNA + (6R)-5,10-methylene-5,6,7,8-tetrahydrofolate + NADPH + H(+) = 5-methyluridine(54) in tRNA + (6S)-5,6,7,8-tetrahydrofolate + NADP(+). Its function is as follows. Catalyzes the folate-dependent formation of 5-methyl-uridine at position 54 (M-5-U54) in all tRNAs. The sequence is that of Methylenetetrahydrofolate--tRNA-(uracil-5-)-methyltransferase TrmFO from Acaryochloris marina (strain MBIC 11017).